The sequence spans 554 residues: Glucose-6-phosphate isomerase (554 aa).

The Proton donor role is filled by Glu-359. Active-site residues include His-390 and Lys-518.

It belongs to the GPI family.

It localises to the cytoplasm. The catalysed reaction is alpha-D-glucose 6-phosphate = beta-D-fructose 6-phosphate. The protein operates within carbohydrate biosynthesis; gluconeogenesis. Its pathway is carbohydrate degradation; glycolysis; D-glyceraldehyde 3-phosphate and glycerone phosphate from D-glucose: step 2/4. Functionally, catalyzes the reversible isomerization of glucose-6-phosphate to fructose-6-phosphate. In Pseudomonas fluorescens (strain ATCC BAA-477 / NRRL B-23932 / Pf-5), this protein is Glucose-6-phosphate isomerase.